Consider the following 1347-residue polypeptide: Protein dispatched homolog 3 (1347 aa).

Over 1–67 (MDSEDDPLLQ…LGWAFTNPCC (67 aa)) the chain is Cytoplasmic. Residues 68-88 (AGLVLFLGCSIPMVLSAFMFL) traverse the membrane as a helical segment. At 89–417 (YYPPLDIDIS…YEVRRTFNND (329 aa)) the chain is on the lumenal side. The tract at residues 156 to 207 (GNHSRPASRAPRSAPRDTVATQTSAANSSERRRREAPSPEGQVTNQSRARRG) is disordered. Asn-157 carries an N-linked (GlcNAc...) asparagine glycan. Residues 159–168 (SRPASRAPRS) are compositionally biased toward low complexity. Residues 412 to 570 (RTFNNDMLLA…LFTMPAALGL (159 aa)) enclose the SSD domain. Residues 418 to 438 (MLLAFISSSCIAALVYILTSC) form a helical membrane-spanning segment. Position 439 (Ser-439) is a topological domain, cytoplasmic. The chain crosses the membrane as a helical span at residues 440-460 (VFLSFFGIASIGLSCLVALFL). The Lumenal portion of the chain corresponds to 461 to 463 (YHV). A helical membrane pass occupies residues 464–484 (VFGIQYLGILNGVAAFVIVGI). The Cytoplasmic segment spans residues 485-528 (GVDDVFVFINTYRQATHLEDPQLRMIHTIQTAGKATFFTSLTTA). A helical transmembrane segment spans residues 529–549 (AAYAANVFSQIPAVHDFGLFM). Ser-550 is a topological domain (lumenal). The chain crosses the membrane as a helical span at residues 551 to 571 (LIVTCCWLAVLFTMPAALGLW). Residues 572 to 684 (SLYMAPLESS…WVLWAAVKSR (113 aa)) lie on the Cytoplasmic side of the membrane. A helical membrane pass occupies residues 685 to 705 (WVIVGLFASILILSLVFASRL). Over 706-1137 (RPASRAPLLF…IFMEIIGVQS (432 aa)) the chain is Lumenal. Residue Asn-976 is glycosylated (N-linked (GlcNAc...) asparagine). Residues 1138–1158 (ALYGLVLSLLICVAAVAVFTT) traverse the membrane as a helical segment. A topological domain (cytoplasmic) is located at residue His-1159. The helical transmembrane segment at 1160–1180 (VLLLLPVLLSILGIVCLVVTI) threads the bilayer. Residues 1181–1246 (MYWSGWEMGA…TLEAVRHVGV (66 aa)) lie on the Lumenal side of the membrane. Residues 1247–1267 (AIVSSALTTVIATVPLFFCII) form a helical membrane-spanning segment. Residues 1268–1281 (APFAKFGKIVALNT) lie on the Cytoplasmic side of the membrane. A helical membrane pass occupies residues 1282–1302 (GVSILYTLTVSTALLGIMAPG). Over 1303–1310 (SFTRTRTS) the chain is Lumenal. The helical transmembrane segment at 1311-1331 (FLKALGAVLLAGALGLGACLV) threads the bilayer. Over 1332–1347 (LLRSGYKIPLPSGATL) the chain is Cytoplasmic.

This sequence belongs to the patched family. As to expression, expressed in brain, retina, testis and thymus.

The protein resides in the endoplasmic reticulum membrane. The protein localises to the nucleus membrane. It localises to the cytoplasmic vesicle membrane. In terms of biological role, plays a role in neuronal proliferation and differentiation. Plays a role in the accumulation of cellular cholesterol. Involved in intracellular lipid droplet formation. May contribute to cholesterol homeostasis in neuronal cells. The chain is Protein dispatched homolog 3 from Mus musculus (Mouse).